A 597-amino-acid polypeptide reads, in one-letter code: Elongation factor 4 (597 aa).

The tr-type G domain occupies 2-184; that stretch reads DHIRNFSIIA…ALIAKVPPPK (183 aa). Residues 14–19 and 131–134 each bind GTP; these read DHGKST and NKID.

Belongs to the TRAFAC class translation factor GTPase superfamily. Classic translation factor GTPase family. LepA subfamily.

The protein localises to the cell inner membrane. It carries out the reaction GTP + H2O = GDP + phosphate + H(+). Its function is as follows. Required for accurate and efficient protein synthesis under certain stress conditions. May act as a fidelity factor of the translation reaction, by catalyzing a one-codon backward translocation of tRNAs on improperly translocated ribosomes. Back-translocation proceeds from a post-translocation (POST) complex to a pre-translocation (PRE) complex, thus giving elongation factor G a second chance to translocate the tRNAs correctly. Binds to ribosomes in a GTP-dependent manner. This is Elongation factor 4 from Paraburkholderia phymatum (strain DSM 17167 / CIP 108236 / LMG 21445 / STM815) (Burkholderia phymatum).